The following is a 1166-amino-acid chain: ATP-dependent helicase/deoxyribonuclease subunit B (1166 aa).

The UvrD-like helicase ATP-binding domain maps to 1-290 (MGMRFILGRS…DTLEGNFQNR (290 aa)). 8 to 15 (GRSGTNKS) is a binding site for ATP. Residues 283-588 (LEGNFQNRPY…QFSHVPPSMD (306 aa)) form the UvrD-like helicase C-terminal domain. [4Fe-4S] cluster contacts are provided by Cys802, Cys1123, Cys1126, and Cys1132.

This sequence belongs to the helicase family. AddB/RexB type 1 subfamily. In terms of assembly, heterodimer of AddA and AddB. Mg(2+) is required as a cofactor. The cofactor is [4Fe-4S] cluster.

Its function is as follows. The heterodimer acts as both an ATP-dependent DNA helicase and an ATP-dependent, dual-direction single-stranded exonuclease. Recognizes the chi site generating a DNA molecule suitable for the initiation of homologous recombination. The AddB subunit has 5' -&gt; 3' nuclease activity but not helicase activity. In Oceanobacillus iheyensis (strain DSM 14371 / CIP 107618 / JCM 11309 / KCTC 3954 / HTE831), this protein is ATP-dependent helicase/deoxyribonuclease subunit B.